The following is a 320-amino-acid chain: Cytochrome f (320 aa).

The first 35 residues, 1–35, serve as a signal peptide directing secretion; sequence MQNRNTFLGVKEQITRSIFVSIMIYVITRASISNA. Residues tyrosine 36, cysteine 56, cysteine 59, and histidine 60 each contribute to the heme site. The chain crosses the membrane as a helical span at residues 286 to 306; it reads IQGLLFFLASVILAQIFLVLK.

It belongs to the cytochrome f family. In terms of assembly, the 4 large subunits of the cytochrome b6-f complex are cytochrome b6, subunit IV (17 kDa polypeptide, petD), cytochrome f and the Rieske protein, while the 4 small subunits are PetG, PetL, PetM and PetN. The complex functions as a dimer. It depends on heme as a cofactor.

Its subcellular location is the plastid. The protein localises to the chloroplast thylakoid membrane. Its function is as follows. Component of the cytochrome b6-f complex, which mediates electron transfer between photosystem II (PSII) and photosystem I (PSI), cyclic electron flow around PSI, and state transitions. This is Cytochrome f from Dioscorea elephantipes (Elephant's foot yam).